Consider the following 397-residue polypeptide: LIM/homeobox protein Lhx9 (397 aa).

LIM zinc-binding domains lie at 69–130 and 131–193; these read ALCA…RFSV and QRCA…LLQG. Disordered stretches follow at residues 248-272, 330-364, and 378-397; these read ENEA…RMRT, ENGG…TLTD, and SNMD…TNLF. Positions 267–326 form a DNA-binding region, homeobox; that stretch reads TKRMRTSFKHHQLRTMKSYFAINHNPDAKDLKQLAQKTGLTKRVLQVWFQNARAKFRRNL. Over residues 353-364 the composition is skewed to low complexity; the sequence is LTPPGTATTLTD.

In terms of assembly, interacts with LDB1 and LDB2.

It localises to the nucleus. Functionally, involved in gonadal development. The protein is LIM/homeobox protein Lhx9 (LHX9) of Homo sapiens (Human).